Here is a 396-residue protein sequence, read N- to C-terminus: MAKAKFERTKPHCNIGTIGHVDHGKTSLTAAITKVLAKTGGATYSAYDQIDKAPEERARGITISTAHVEYETADRHYAHVDCPGHADYVKNMITGAAQMDGAILVVSAADGPMPQTREHILLARQVGVPALVVFLNKVDQVDDPELLELVEMEVRELLSSYQFPGDDIPIVKGSALVTLEDGDPSIGEDRVLELMTQVDAYIPQPERPVDRPFLMPIEDVFSISGRGTVVTGRVERGVVNVGDEVEIVGLKDTVKTTVTGVEMFRKLLDRGEAGDNIGALVRGTKREDVERGQVLAKPGSITPHKKFKAEAYILTKEEGGRHTPFFTNYRPQFYFRTTDVTGVVTLPEGTEMVMPGDNVAMDVELIAPIAMDEGLRFAIREGGRTVGAGVVSSITA.

A tr-type G domain is found at 10–206; it reads KPHCNIGTIG…QVDAYIPQPE (197 aa). Residues 19–26 are G1; it reads GHVDHGKT. Residue 19–26 participates in GTP binding; sequence GHVDHGKT. Residue T26 coordinates Mg(2+). Residues 60-64 are G2; it reads GITIS. A G3 region spans residues 81 to 84; the sequence is DCPG. GTP-binding positions include 81 to 85 and 136 to 139; these read DCPGH and NKVD. Residues 136-139 form a G4 region; it reads NKVD. The G5 stretch occupies residues 174–176; it reads SAL.

Belongs to the TRAFAC class translation factor GTPase superfamily. Classic translation factor GTPase family. EF-Tu/EF-1A subfamily. As to quaternary structure, monomer.

Its subcellular location is the cytoplasm. It catalyses the reaction GTP + H2O = GDP + phosphate + H(+). Functionally, GTP hydrolase that promotes the GTP-dependent binding of aminoacyl-tRNA to the A-site of ribosomes during protein biosynthesis. The sequence is that of Elongation factor Tu from Gluconobacter oxydans (strain 621H) (Gluconobacter suboxydans).